The chain runs to 325 residues: Eukaryotic translation initiation factor 3 subunit I (325 aa).

WD repeat units lie at residues 1 to 39 (MKPI…VWYS), 43 to 81 (ERLG…LWDC), 87 to 127 (LALL…FFDL), 135 to 175 (NNEP…QYSA), and 180 to 217 (VLVN…LFDS). Threonine 219 bears the Phosphothreonine mark. WD repeat units follow at residues 221 to 267 (EHQK…KFEA) and 275 to 316 (EEEF…YFDP). Residue lysine 264 is modified to N6-acetyllysine. Lysine 282 is covalently cross-linked (Glycyl lysine isopeptide (Lys-Gly) (interchain with G-Cter in ubiquitin)). A Phosphotyrosine modification is found at tyrosine 308.

As to quaternary structure, component of the eukaryotic translation initiation factor 3 (eIF-3) complex, which is composed of 13 subunits: EIF3A, EIF3B, EIF3C, EIF3D, EIF3E, EIF3F, EIF3G, EIF3H, EIF3I, EIF3J, EIF3K, EIF3L and EIF3M. The eIF-3 complex appears to include 3 stable modules: module A is composed of EIF3A, EIF3B, EIF3G and EIF3I; module B is composed of EIF3F, EIF3H, and EIF3M; and module C is composed of EIF3C, EIF3D, EIF3E, EIF3K and EIF3L. EIF3C of module C binds EIF3B of module A and EIF3H of module B, thereby linking the three modules. EIF3J is a labile subunit that binds to the eIF-3 complex via EIF3B. The eIF-3 complex interacts with RPS6KB1 under conditions of nutrient depletion. Mitogenic stimulation leads to binding and activation of a complex composed of MTOR and RPTOR, leading to phosphorylation and release of RPS6KB1 and binding of EIF4B to eIF-3. Post-translationally, phosphorylated by TGF-beta type II receptor.

It localises to the cytoplasm. Functionally, component of the eukaryotic translation initiation factor 3 (eIF-3) complex, which is required for several steps in the initiation of protein synthesis. The eIF-3 complex associates with the 40S ribosome and facilitates the recruitment of eIF-1, eIF-1A, eIF-2:GTP:methionyl-tRNAi and eIF-5 to form the 43S pre-initiation complex (43S PIC). The eIF-3 complex stimulates mRNA recruitment to the 43S PIC and scanning of the mRNA for AUG recognition. The eIF-3 complex is also required for disassembly and recycling of post-termination ribosomal complexes and subsequently prevents premature joining of the 40S and 60S ribosomal subunits prior to initiation. The eIF-3 complex specifically targets and initiates translation of a subset of mRNAs involved in cell proliferation, including cell cycling, differentiation and apoptosis, and uses different modes of RNA stem-loop binding to exert either translational activation or repression. The sequence is that of Eukaryotic translation initiation factor 3 subunit I from Homo sapiens (Human).